Here is an 874-residue protein sequence, read N- to C-terminus: Coatomer subunit gamma-1 (874 aa).

The segment covering 1–11 (MLKKFDKKDEE) has biased composition (basic and acidic residues). Residues 1 to 21 (MLKKFDKKDEESGGGSNPLQH) form a disordered region. HEAT repeat units lie at residues 64-101 (TEATEAFFAMTKLFQSNDPTLRRMCYLTIKEMSCIAED), 283-320 (KELAPAVSVLQLFCSSPKAALRYAAVRTLNKVAMKHPS), 322-355 (VTACNLDLENLVTDSNRSIATLAITTLLKTGSES), and 356-392 (SIDRLMKQISSFMSEISDEFKVVVVQAISALCQKYPR). Thr-594 carries the phosphothreonine modification. The tract at residues 609 to 874 (RQEIFQEQLA…PVDIILASVG (266 aa)) is interaction with ZNF289/ARFGAP2.

The protein belongs to the COPG family. As to quaternary structure, oligomeric complex that consists of at least the alpha, beta, beta', gamma, delta, epsilon and zeta subunits. Interacts with ZNF289/ARFGAP2 through its C-terminal appendage domain. Interacts with EGFR upon EGF treatment; interaction is essential for regulation of EGF-dependent nuclear transport of EGFR by retrograde trafficking from the Golgi to the ER. The coatomer interacts with KDEL receptors; the interaction is important for retrograde trafficking of KDEL-bearing proteins from the Golgi to the endoplasmic reticulum. Interacts with COPB1. Interacts with TMED10 (via C-terminus). Interacts with TMED2, TMED3, TMED7 and TMED9.

Its subcellular location is the cytoplasm. The protein resides in the cytosol. It is found in the golgi apparatus membrane. The protein localises to the cytoplasmic vesicle. It localises to the COPI-coated vesicle membrane. The coatomer is a cytosolic protein complex that binds to dilysine motifs and reversibly associates with Golgi non-clathrin-coated vesicles, which further mediate biosynthetic protein transport from the ER, via the Golgi up to the trans Golgi network. Coatomer complex is required for budding from Golgi membranes, and is essential for the retrograde Golgi-to-ER transport of dilysine-tagged proteins. In mammals, the coatomer can only be recruited by membranes associated to ADP-ribosylation factors (ARFs), which are small GTP-binding proteins; the complex also influences the Golgi structural integrity, as well as the processing, activity, and endocytic recycling of LDL receptors. Required for limiting lipid storage in lipid droplets. Involved in lipid homeostasis by regulating the presence of perilipin family members PLIN2 and PLIN3 at the lipid droplet surface and promoting the association of adipocyte triglyceride lipase (PNPLA2) with the lipid droplet surface to mediate lipolysis. The chain is Coatomer subunit gamma-1 (Copg1) from Rattus norvegicus (Rat).